The chain runs to 176 residues: Pituitary adenylate cyclase-activating polypeptide (176 aa).

The N-terminal stretch at 1–24 is a signal peptide; that stretch reads MTMCSGARLALLVYGILMHSSVYG. Residues 25 to 80 constitute a propeptide that is removed on maturation; that stretch reads SPAASGLRFPGIRPENEAYDEDGNPQQDFYDSEPPGVGSPASALRDAYALYYPAEE. Disordered regions lie at residues 36-62 and 115-134; these read IRPE…PGVG and GTPG…RHSD. The interval 150–158 is important for receptor binding; that stretch reads VKKYLAAVL. L158 carries the post-translational modification Leucine amide. K169 carries the lysine amide modification. Residues 173–176 constitute a propeptide that is removed on maturation; it reads IPYL.

It belongs to the glucagon family.

Its subcellular location is the secreted. Functionally, PACAP is a neuropeptide involved in diverse array of physiological processes through activating the PACAP subfamily of class B1 G protein-coupled receptors: VIP receptor 1 (VIPR1), VIP receptor 2 (VIPR2), and PACAP type I receptor (ADCYAP1R1). Exerts neuroprotective and general cytoprotective effects due to anti-apoptotic, anti-inflammatory, and antioxidant actions. Promotes neuron projection development through the RAPGEF2/Rap1/B-Raf/ERK pathway. In chromaffin cells, induces long-lasting increase of intracellular calcium concentrations and neuroendocrine secretion. Involved in the control of glucose homeostasis, induces insulin secretion by pancreatic beta cells. PACAP exists in two bioactive forms from proteolysis of the same precursor protein, PACAP27 and PACAP38, which differ by eleven amino acid residues in the C-terminus. The polypeptide is Pituitary adenylate cyclase-activating polypeptide (ADCYAP1) (Ovis aries (Sheep)).